Here is a 42-residue protein sequence, read N- to C-terminus: Small, acid-soluble spore protein L (42 aa).

Residues 1-42 (MKKKDKGRLTGGVTPQGDLEGNTHNDPKTELEERAKKSNTKR) are disordered. Positions 21 to 36 (GNTHNDPKTELEERAK) are enriched in basic and acidic residues.

It localises to the spore core. The chain is Small, acid-soluble spore protein L (sspL) from Bacillus subtilis (strain 168).